A 65-amino-acid chain; its full sequence is Sarcoplasmic/endoplasmic reticulum calcium ATPase regulator ARLN (65 aa).

Residue Met1 is modified to N-acetylmethionine. Residues 1–38 form a disordered region; that stretch reads MEVGQAASGTDGVRERRGSSAARRRSQDEPVQSGMNGI. Residues Ser19 and Ser26 each carry the phosphoserine modification. The helical transmembrane segment at 44–64 threads the bilayer; sequence WLDLWLFILFDLALFIFVYLL.

As to quaternary structure, homooligomer. Can also form heterooligomers with other sarcoplasmic/endoplasmic reticulum calcium ATPase (SERCA) regulators ERLN, PLN, SLN and STRIT1/DWORF. Monomer. Interacts as a monomer with ATP2A2/SERCA2; the interaction results in inhibition of ATP2A2 Ca(2+) affinity.

It localises to the endoplasmic reticulum membrane. In terms of biological role, inhibits the activity of the calcium ATPases ATP2A2/SERCA2 and ATP2A3/SERCA3 by decreasing their apparent affinity for Ca(2+). This Rattus norvegicus (Rat) protein is Sarcoplasmic/endoplasmic reticulum calcium ATPase regulator ARLN (Arln).